A 109-amino-acid polypeptide reads, in one-letter code: Thiosulfate sulfurtransferase GlpE (109 aa).

In terms of domain architecture, Rhodanese spans 16-104; sequence REQGAVVVDV…WRTTFPSETA (89 aa). C64 functions as the Cysteine persulfide intermediate in the catalytic mechanism.

The protein belongs to the GlpE family.

It is found in the cytoplasm. The enzyme catalyses thiosulfate + hydrogen cyanide = thiocyanate + sulfite + 2 H(+). The catalysed reaction is thiosulfate + [thioredoxin]-dithiol = [thioredoxin]-disulfide + hydrogen sulfide + sulfite + 2 H(+). Functionally, transferase that catalyzes the transfer of sulfur from thiosulfate to thiophilic acceptors such as cyanide or dithiols. May function in a CysM-independent thiosulfate assimilation pathway by catalyzing the conversion of thiosulfate to sulfite, which can then be used for L-cysteine biosynthesis. The chain is Thiosulfate sulfurtransferase GlpE from Pseudomonas fluorescens (strain Pf0-1).